The chain runs to 444 residues: 23S rRNA (uracil(1939)-C(5))-methyltransferase RlmD (444 aa).

The TRAM domain occupies 5 to 64; sequence KPKLNLTSQTARIVNLSHDGRGIARVNGKATFIQGALPGEVVEFQYTRIKKDFDEGKLLS. 4 residues coordinate [4Fe-4S] cluster: Cys77, Cys83, Cys86, and Cys166. Positions 276, 305, 310, 326, 353, and 374 each coordinate S-adenosyl-L-methionine. Cys400 (nucleophile) is an active-site residue.

This sequence belongs to the class I-like SAM-binding methyltransferase superfamily. RNA M5U methyltransferase family. RlmD subfamily.

The catalysed reaction is uridine(1939) in 23S rRNA + S-adenosyl-L-methionine = 5-methyluridine(1939) in 23S rRNA + S-adenosyl-L-homocysteine + H(+). Its function is as follows. Catalyzes the formation of 5-methyl-uridine at position 1939 (m5U1939) in 23S rRNA. This chain is 23S rRNA (uracil(1939)-C(5))-methyltransferase RlmD, found in Legionella pneumophila (strain Corby).